The sequence spans 85 residues: Large ribosomal subunit protein bL27 (85 aa).

The tract at residues 1–23 (MAHKKGQGSTQNNRDSAGRRLGV) is disordered.

Belongs to the bacterial ribosomal protein bL27 family.

The chain is Large ribosomal subunit protein bL27 from Helicobacter hepaticus (strain ATCC 51449 / 3B1).